The chain runs to 345 residues: Uroporphyrinogen decarboxylase (345 aa).

Substrate contacts are provided by residues 27-31 (RQAGR), Phe46, Asp76, Tyr152, Ser207, and His320.

The protein belongs to the uroporphyrinogen decarboxylase family. Homodimer.

It localises to the cytoplasm. The catalysed reaction is uroporphyrinogen III + 4 H(+) = coproporphyrinogen III + 4 CO2. It participates in porphyrin-containing compound metabolism; protoporphyrin-IX biosynthesis; coproporphyrinogen-III from 5-aminolevulinate: step 4/4. Its function is as follows. Catalyzes the decarboxylation of four acetate groups of uroporphyrinogen-III to yield coproporphyrinogen-III. The sequence is that of Uroporphyrinogen decarboxylase from Oceanobacillus iheyensis (strain DSM 14371 / CIP 107618 / JCM 11309 / KCTC 3954 / HTE831).